Consider the following 540-residue polypeptide: 2-isopropylmalate synthase (540 aa).

In terms of domain architecture, Pyruvate carboxyltransferase spans 8–273 (VLIFDTTLRD…FFGRDEDSPT (266 aa)). Mn(2+) contacts are provided by Asp-17, His-208, His-210, and Asn-244. The regulatory domain stretch occupies residues 408-540 (QLKLVQVSCG…MAQLDSSPVH (133 aa)).

This sequence belongs to the alpha-IPM synthase/homocitrate synthase family. LeuA type 1 subfamily. Homodimer. Mn(2+) is required as a cofactor.

The protein resides in the cytoplasm. It catalyses the reaction 3-methyl-2-oxobutanoate + acetyl-CoA + H2O = (2S)-2-isopropylmalate + CoA + H(+). It participates in amino-acid biosynthesis; L-leucine biosynthesis; L-leucine from 3-methyl-2-oxobutanoate: step 1/4. Catalyzes the condensation of the acetyl group of acetyl-CoA with 3-methyl-2-oxobutanoate (2-ketoisovalerate) to form 3-carboxy-3-hydroxy-4-methylpentanoate (2-isopropylmalate). The sequence is that of 2-isopropylmalate synthase from Synechococcus sp. (strain CC9311).